We begin with the raw amino-acid sequence, 314 residues long: Olfactory receptor 5P62 (314 aa).

Residues 1–28 (MAFIYNGSQTTVTEFILLGLTDDPVLKV) are Extracellular-facing. Residue asparagine 6 is glycosylated (N-linked (GlcNAc...) asparagine). The helical transmembrane segment at 29–49 (ILFCIILCIYLVTVFGNLSTI) threads the bilayer. Residues 50–57 (LLIGVSSK) lie on the Cytoplasmic side of the membrane. The chain crosses the membrane as a helical span at residues 58-78 (LHHPMYFFLSHLASVDMGLSS). The Extracellular portion of the chain corresponds to 79–102 (SVTPNMLVNFLTEKNTISYLGCGI). Cysteine 100 and cysteine 192 form a disulfide bridge. A helical membrane pass occupies residues 103-123 (QLSSAAFFGAVEFFLLAAMAY). Over 124 to 136 (DRLVAICNPLLYS) the chain is Cytoplasmic. The helical transmembrane segment at 137 to 157 (TKMSSQVCIQLVAGSYVGGFL) threads the bilayer. Topologically, residues 158-199 (NASFVTHFFFSFLFCGPNRVNHFFCDLSPMMELSCSDVSISE) are extracellular. A helical transmembrane segment spans residues 200–220 (IVISFSAGSFTMTTLFVIVIP). Residues 221 to 240 (YFYIFITILKIRSTEGRQKA) lie on the Cytoplasmic side of the membrane. Residues 241–261 (FSTCTSHLTAVTLYYGTIIFI) form a helical membrane-spanning segment. The Extracellular portion of the chain corresponds to 262–274 (YVMPKSTYSRDQN). The chain crosses the membrane as a helical span at residues 275–295 (KVVSLFYMLVIPVLNPLIYSL). Residues 296 to 314 (RNNEIKDALKRQFYRKTLL) are Cytoplasmic-facing.

It belongs to the G-protein coupled receptor 1 family.

It is found in the cell membrane. In terms of biological role, potential odorant receptor. The chain is Olfactory receptor 5P62 from Mus musculus (Mouse).